The chain runs to 237 residues: Protein PetR (237 aa).

In terms of domain architecture, Response regulatory spans 8 to 121 (HLLIVDDDER…ELLLRINAIL (114 aa)). D57 bears the 4-aspartylphosphate mark. Positions 77–95 (ATPILLLTARGETRERIEG) form a DNA-binding region, H-T-H motif. Positions 132–236 (PKYLSLGPLR…VRGLGYMLAP (105 aa)) form a DNA-binding region, ompR/PhoB-type.

Necessary for photosynthetic and respiratory growth. Probable promoter-specific protein mediating the interaction between DNA and RNA polymerase. This Rhodobacter capsulatus (strain ATCC BAA-309 / NBRC 16581 / SB1003) protein is Protein PetR (petR).